A 131-amino-acid polypeptide reads, in one-letter code: uncharacterized protein (131 aa).

The next 2 helical transmembrane spans lie at 68–88 (VVRA…VAPI) and 94–114 (VLGA…IVAI).

It is found in the cell membrane. This is an uncharacterized protein from Methanocaldococcus jannaschii (strain ATCC 43067 / DSM 2661 / JAL-1 / JCM 10045 / NBRC 100440) (Methanococcus jannaschii).